The following is an 864-amino-acid chain: Seed linoleate 9S-lipoxygenase-2 (864 aa).

Residues 46–171 (SGINIIGSTL…LYKSPRIFFA (126 aa)) form the PLAT domain. A Lipoxygenase domain is found at 174-864 (SYLPSETPSP…FRGIPNSISI (691 aa)). Residues 230–264 (PILGGSSTHPYPRRGRTGRYPTRKDPNSEKPATET) are disordered. Basic and acidic residues predominate over residues 251-264 (TRKDPNSEKPATET). The Fe cation site is built by His524, His529, His716, Asn720, and Ile864.

This sequence belongs to the lipoxygenase family. Fe cation is required as a cofactor.

It localises to the cytoplasm. It carries out the reaction (9Z,12Z)-octadecadienoate + O2 = (9S)-hydroperoxy-(10E,12Z)-octadecadienoate. Its pathway is lipid metabolism; oxylipin biosynthesis. Its function is as follows. Plant lipoxygenase may be involved in a number of diverse aspects of plant physiology including growth and development, pest resistance, and senescence or responses to wounding. It catalyzes the hydroperoxidation of lipids containing a cis,cis-1,4-pentadiene structure. The polypeptide is Seed linoleate 9S-lipoxygenase-2 (LOX1.2) (Pisum sativum (Garden pea)).